The sequence spans 183 residues: Ras-related protein Rap-2c (183 aa).

10-17 (GSGGVGKS) provides a ligand contact to GTP. The Effector region motif lies at 32–40 (YDPTIEDFY). Residues 57 to 61 (DTAGT) and 116 to 119 (NKVD) each bind GTP. 2 S-palmitoyl cysteine lipidation sites follow: Cys-176 and Cys-177. Cys-180 carries the cysteine methyl ester modification. Residue Cys-180 is the site of S-geranylgeranyl cysteine attachment. A propeptide spans 181 to 183 (VVQ) (removed in mature form).

It belongs to the small GTPase superfamily. Ras family. Palmitoylated. Palmitoylation is required for association with recycling endosome membranes and activation of TNIK.

It is found in the cytoplasm. Its subcellular location is the recycling endosome membrane. The catalysed reaction is GTP + H2O = GDP + phosphate + H(+). Small GTP-binding protein which cycles between a GDP-bound inactive and a GTP-bound active form. May play a role in cytoskeletal rearrangements and regulate cell spreading through activation of the effector TNIK. May play a role in SRE-mediated gene transcription. This Bos taurus (Bovine) protein is Ras-related protein Rap-2c (RAP2C).